A 774-amino-acid chain; its full sequence is Ent-beyerene synthase KSL4, chloroplastic (774 aa).

The N-terminal 35 residues, 1-35, are a transit peptide targeting the chloroplast; sequence MLLGSTNTLRISSHGKEWEGKTLTGMPLGKVNQRV. Mg(2+) is bound by residues Asp-525, Asp-529, Asn-668, Asp-669, Thr-672, and Glu-676. The DDXXD motif motif lies at 525 to 529; the sequence is DDFFD.

It belongs to the terpene synthase family. Mg(2+) is required as a cofactor.

It is found in the plastid. It localises to the chloroplast. It catalyses the reaction ent-copalyl diphosphate = ent-beyerene + diphosphate. The catalysed reaction is ent-copalyl diphosphate = ent-atiserene + diphosphate. The enzyme catalyses ent-copalyl diphosphate = ent-kaur-16-ene + diphosphate. It participates in secondary metabolite biosynthesis; terpenoid biosynthesis. Its function is as follows. Diterpene cyclase involved in the biosynthesis of labdane-related diterpenoids (LRDs) natural products. Catalyzes the cyclization of ent-CDP into ent-beyerene as a major and ent-kaurene and ent-atiserene as minor products. In Ricinus communis (Castor bean), this protein is Ent-beyerene synthase KSL4, chloroplastic.